We begin with the raw amino-acid sequence, 704 residues long: MWGRDYELKYISYPKSVAIIGASKTEGKVGYAIMKNLKDFNGKIYPINPKYDEIFGIKCYKSVLDVEDDIDLAVIVVPNIVVPKVLEECGKKGVKGAVIITAGFSEVGNYELENKIKEIAKRYNIRIIGPNCLGIMNTHINLNATFAKVFPPKGGVSIISQSGAVLNAILDIAPLLNIGFSKVVSIGNKADIQESDLLEYFLDDEDTKIVVLYIEGLKDKRFLKVAKKLSKKKPIIALKSGRTEVGKKAAKSHTGSLAGEDVIYEAAFKEAGIIRAYTFEELVDLIHLFSTQPTISSNEIGIITNAGGFGVLAADSCVDYNMKLSNFEKSTIEKLKNILPPTANISNPLDIIGDATPERYKKVIEVLAEDSNVKGLLVILTPQEMTKPLEVAKSIIEVKNSHKEFKNKPLITSFVGGVSVKGAKSYLRKNGIPAYITPENGVKALSHLYKYSLMKVKEDYDEYLENIKEEFIKITEENKEIIKELLSNPNEYTAKKLLSIYGLPVPKGYLAKNEDEALEYCKKLGKCVMKIVSPQIIHKTEAGGVIINPKNPKEAFKKLIENAKEYAKRMGIDNLIIEGVLVEEFIEKDMMEIIIGAKRDDIFGSVVMVGLGGVFVEVLKDVSFGISPITRDFAHEMLRELKSYKVLEGVRGRPKRDINFIVDTLIKIGVFMDIHKEIKELDLNPVFVFNEKEGGCIGDARIIK.

This sequence in the N-terminal section; belongs to the acetate CoA ligase alpha subunit family. In the C-terminal section; belongs to the acetate CoA ligase beta subunit family. As to quaternary structure, homodimer.

It carries out the reaction acetate + ATP + CoA = acetyl-CoA + ADP + phosphate. Catalyzes the formation of acetate and ATP from acetyl-CoA by using ADP and phosphate. Can also use butyryl-CoA, but not phenylacetyl-CoA. Cannot catalyze the reverse reaction. In Methanocaldococcus jannaschii (strain ATCC 43067 / DSM 2661 / JAL-1 / JCM 10045 / NBRC 100440) (Methanococcus jannaschii), this protein is Acetate--CoA ligase [ADP-forming].